An 817-amino-acid polypeptide reads, in one-letter code: MFFGRDDKKEAQKRGLTVPLLPLRDIIVFPHMVVPLFVGREKSIAALKDAMAHKGPDDKAVILLAAQKKAKTNDPTPDDIFHFGTLGHVIQLLPLPDGTVKVLVEGVRRAKVKKFHPNDAFFMVEVEEVEEQTEKTVELEALVRSVHSVFEAFVKLNKRIPPEMLMQVASIDDPARLADTIVAHLSLKLNDKQALLETESPAKRLEKLYELMQGEIEILQVEKKIRTRVKKQMEKTQKEYYLNEQMQAIQKELGERDEFKNEIQEIEEKLKNKRMSKEATLKVKKELKKLRMMSPMSAEATVVRNYIDWIISLPWYDETQDRLDVTEAETVLNEDHYGLKKPKERILEYLAVQQLVKKLKGPVLCFVGPPGVGKTSLARSIARATGRKFVRLSLGGVRDEAEIRGHRRTYIGAMPGKLIQSLKKAGSNNPVFLLDEIDKMSTDFRGDPSAALLEVLDPEQNHTFNDHYLDLDYDLSKVMFICTANTMHNIPGPLQDRMEVIRIAGYTEPEKLSIARRYLIPKEQEANGLSDLKVDISDPALRTIIHRYTRESGVRSLEREIGGVFRKIARDVLKNGKRDIDVDRKMAMKFLGTPRYRYGMAEAEDQVGIVTGLAWTELGGEILTTEATIMPGKGKLIITGKLGEVMQESAQAAMSYVRSRAERFGIDRKVFENYDIHVHLPEGAIPKDGPSAGVTICTALVSALTRVLIRRDVAMTGEITLRGRVLPIGGLKEKTLAAHRAGIKTVLIPKANKKDLKDIPLKIRKQLRIVPVEFVDDVLREALVLEKPEEFGRKPTTDGGKLGGTTELPASPAVAPA.

The Lon N-terminal domain maps to 18–216; it reads VPLLPLRDII…KLYELMQGEI (199 aa). 368 to 375 contributes to the ATP binding site; that stretch reads GPPGVGKT. The Lon proteolytic domain maps to 604 to 785; it reads EDQVGIVTGL…DDVLREALVL (182 aa). Active-site residues include S691 and K734. The tract at residues 789-817 is disordered; that stretch reads EEFGRKPTTDGGKLGGTTELPASPAVAPA.

This sequence belongs to the peptidase S16 family. In terms of assembly, homohexamer. Organized in a ring with a central cavity.

It localises to the cytoplasm. The enzyme catalyses Hydrolysis of proteins in presence of ATP.. In terms of biological role, ATP-dependent serine protease that mediates the selective degradation of mutant and abnormal proteins as well as certain short-lived regulatory proteins. Required for cellular homeostasis and for survival from DNA damage and developmental changes induced by stress. Degrades polypeptides processively to yield small peptide fragments that are 5 to 10 amino acids long. Binds to DNA in a double-stranded, site-specific manner. The polypeptide is Lon protease 1 (Myxococcus xanthus).